Reading from the N-terminus, the 237-residue chain is 2,3-bisphosphoglycerate-dependent phosphoglycerate mutase (237 aa).

Substrate-binding positions include 8–15, 21–22, Arg60, 87–90, Lys98, 114–115, and 180–181; these read RHGQSQWN, TG, ERHY, RR, and GN. His9 functions as the Tele-phosphohistidine intermediate in the catalytic mechanism. The active-site Proton donor/acceptor is the Glu87.

It belongs to the phosphoglycerate mutase family. BPG-dependent PGAM subfamily. Homodimer.

It catalyses the reaction (2R)-2-phosphoglycerate = (2R)-3-phosphoglycerate. Its pathway is carbohydrate degradation; glycolysis; pyruvate from D-glyceraldehyde 3-phosphate: step 3/5. Catalyzes the interconversion of 2-phosphoglycerate and 3-phosphoglycerate. In Caulobacter sp. (strain K31), this protein is 2,3-bisphosphoglycerate-dependent phosphoglycerate mutase.